The chain runs to 376 residues: Branched-chain-amino-acid aminotransferase, cytosolic (376 aa).

Lys-202 is subject to N6-(pyridoxal phosphate)lysine.

Belongs to the class-IV pyridoxal-phosphate-dependent aminotransferase family. Pyridoxal 5'-phosphate is required as a cofactor.

Its subcellular location is the cytoplasm. The catalysed reaction is L-leucine + 2-oxoglutarate = 4-methyl-2-oxopentanoate + L-glutamate. The enzyme catalyses L-isoleucine + 2-oxoglutarate = (S)-3-methyl-2-oxopentanoate + L-glutamate. It carries out the reaction L-valine + 2-oxoglutarate = 3-methyl-2-oxobutanoate + L-glutamate. It catalyses the reaction a 2-oxocarboxylate + L-methionine = 4-methylsulfanyl-2-oxobutanoate + an L-alpha-amino acid. It functions in the pathway amino-acid biosynthesis; L-isoleucine biosynthesis; L-isoleucine from 2-oxobutanoate: step 4/4. Its pathway is amino-acid biosynthesis; L-leucine biosynthesis; L-leucine from 3-methyl-2-oxobutanoate: step 4/4. The protein operates within amino-acid biosynthesis; L-valine biosynthesis; L-valine from pyruvate: step 4/4. It participates in amino-acid biosynthesis; L-methionine biosynthesis via salvage pathway; L-methionine from S-methyl-5-thio-alpha-D-ribose 1-phosphate: step 6/6. Cytoplasmic isozyme of branched-chain-amino-acid aminotransferase, which catalyzes the first reaction in the catabolism of the essential branched chain amino acids (BCAAs) leucine, isoleucine, and valine. Catalyzes the formation of methionine from 2-keto-4-methylthiobutyrate (KMTB) in the methionine salvage pathway primarily using BCAAs (leucine, isoleucine, and valine) as well as lysine and proline as the amino donors. Involved in cell cycle regulation. This is Branched-chain-amino-acid aminotransferase, cytosolic from Saccharomyces cerevisiae (strain ATCC 204508 / S288c) (Baker's yeast).